The sequence spans 126 residues: Large ribosomal subunit protein bL12 (126 aa).

The protein belongs to the bacterial ribosomal protein bL12 family. Homodimer. Part of the ribosomal stalk of the 50S ribosomal subunit. Forms a multimeric L10(L12)X complex, where L10 forms an elongated spine to which 2 to 4 L12 dimers bind in a sequential fashion. Binds GTP-bound translation factors.

Functionally, forms part of the ribosomal stalk which helps the ribosome interact with GTP-bound translation factors. Is thus essential for accurate translation. The protein is Large ribosomal subunit protein bL12 of Tropheryma whipplei (strain TW08/27) (Whipple's bacillus).